We begin with the raw amino-acid sequence, 439 residues long: Mitochondrial distribution and morphology protein 10 (439 aa).

The segment at Leu275–Thr305 is disordered. Residues Pro280 to Thr305 are compositionally biased toward low complexity.

Belongs to the MDM10 family. Component of the ER-mitochondria encounter structure (ERMES) or MDM complex, composed of MMM1, MDM10, MDM12 and MDM34. Associates with the mitochondrial outer membrane sorting assembly machinery SAM(core) complex.

It is found in the mitochondrion outer membrane. In terms of biological role, component of the ERMES/MDM complex, which serves as a molecular tether to connect the endoplasmic reticulum and mitochondria. Components of this complex are involved in the control of mitochondrial shape and protein biogenesis and may function in phospholipid exchange. MDM10 is involved in the late assembly steps of the general translocase of the mitochondrial outer membrane (TOM complex). Functions in the TOM40-specific route of the assembly of outer membrane beta-barrel proteins, including the association of TOM40 with the receptor TOM22 and small TOM proteins. Can associate with the SAM(core) complex as well as the MDM12-MMM1 complex, both involved in late steps of the major beta-barrel assembly pathway, that is responsible for biogenesis of all outer membrane beta-barrel proteins. May act as a switch that shuttles between both complexes and channels precursor proteins into the TOM40-specific pathway. Plays a role in mitochondrial morphology and in the inheritance of mitochondria. This Laccaria bicolor (strain S238N-H82 / ATCC MYA-4686) (Bicoloured deceiver) protein is Mitochondrial distribution and morphology protein 10.